Consider the following 194-residue polypeptide: ATP-dependent Clp protease proteolytic subunit (194 aa).

Catalysis depends on Ser-99, which acts as the Nucleophile. Residue His-124 is part of the active site.

The protein belongs to the peptidase S14 family. Fourteen ClpP subunits assemble into 2 heptameric rings which stack back to back to give a disk-like structure with a central cavity, resembling the structure of eukaryotic proteasomes.

It is found in the cytoplasm. The catalysed reaction is Hydrolysis of proteins to small peptides in the presence of ATP and magnesium. alpha-casein is the usual test substrate. In the absence of ATP, only oligopeptides shorter than five residues are hydrolyzed (such as succinyl-Leu-Tyr-|-NHMec, and Leu-Tyr-Leu-|-Tyr-Trp, in which cleavage of the -Tyr-|-Leu- and -Tyr-|-Trp bonds also occurs).. In terms of biological role, cleaves peptides in various proteins in a process that requires ATP hydrolysis. Has a chymotrypsin-like activity. Plays a major role in the degradation of misfolded proteins. The sequence is that of ATP-dependent Clp protease proteolytic subunit from Borrelia garinii subsp. bavariensis (strain ATCC BAA-2496 / DSM 23469 / PBi) (Borreliella bavariensis).